The chain runs to 555 residues: E3 ubiquitin-protein ligase NEURL1B (555 aa).

Residues 38 to 194 (APRFHAQAKG…ITDEVQLLES (157 aa)) form the NHR 1 domain. T199 carries the post-translational modification Phosphothreonine. Positions 279 to 433 (DLRFHATRGP…GVAGQLRLLG (155 aa)) constitute an NHR 2 domain. Positions 436–493 (QSSPATTTPSGSLSGSQDDSDSDMTFSVNQSSSASESSLVTAPSSPLSPPVSPVFSPP) are disordered. The segment covering 462-480 (SVNQSSSASESSLVTAPSS) has biased composition (low complexity). Residues 481-493 (PLSPPVSPVFSPP) are compositionally biased toward pro residues. The RING-type zinc finger occupies 503–543 (CTVCFDGEVDTVIYTCGHMCLCHSCGLRLKRQARACCPICR).

In terms of assembly, interacts with JAG1, DLL1 and DLL4. As to expression, highest expression in brain, prostate and small intestine. In the brain the levels are higher in fetal than in adult stage. In the adult brain the highest levels are detected in the olfactory system, cerebellar cortex, optic nerve and the frontal lobe.

It is found in the cytoplasm. It carries out the reaction S-ubiquitinyl-[E2 ubiquitin-conjugating enzyme]-L-cysteine + [acceptor protein]-L-lysine = [E2 ubiquitin-conjugating enzyme]-L-cysteine + N(6)-ubiquitinyl-[acceptor protein]-L-lysine.. It participates in protein modification; protein ubiquitination. E3 ubiquitin-protein ligase involved in regulation of the Notch pathway through influencing the stability and activity of several Notch ligands. This Homo sapiens (Human) protein is E3 ubiquitin-protein ligase NEURL1B (NEURL1B).